Reading from the N-terminus, the 3748-residue chain is Intermembrane lipid transfer protein VPS13C (3748 aa).

A Chorein N-terminal domain is found at 3 to 115; it reads LESVVADLLN…SLQDIKQKEL (113 aa). Residue Ser132 is modified to Phosphoserine. Thr613 carries the phosphothreonine modification. At Ser618 the chain carries Phosphoserine. Phosphothreonine is present on Thr623. Residues Ser736, Ser841, Ser871, and Ser873 each carry the phosphoserine modification. Residues 876–882 carry the FFAT motif; it reads EFFDAED. Residue Thr1968 is modified to Phosphothreonine. Phosphoserine occurs at positions 1974 and 2442. The segment at 2410–3304 is required for late endosome/lysosome localization; it reads DYSLKDRAPF…IQQDIDALNT (895 aa). Positions 2760-3012 constitute an SHR-BD domain; sequence ELSVFSPYWL…LFAWADPTGI (253 aa). The interval 3305-3748 is required for lipid droplet localization; the sequence is ELMESSMTDM…VKLLRPQGPS (444 aa). Arg3514 and Arg3521 each carry omega-N-methylarginine. Lys3533 carries the post-translational modification N6-acetyllysine.

The protein belongs to the VPS13 family.

It is found in the mitochondrion outer membrane. The protein localises to the lipid droplet. Its subcellular location is the endoplasmic reticulum membrane. The protein resides in the lysosome membrane. It localises to the late endosome membrane. In terms of biological role, mediates the transfer of lipids between membranes at organelle contact sites. Necessary for proper mitochondrial function and maintenance of mitochondrial transmembrane potential. Involved in the regulation of PINK1/PRKN-mediated mitophagy in response to mitochondrial depolarization. The sequence is that of Intermembrane lipid transfer protein VPS13C from Mus musculus (Mouse).